Consider the following 591-residue polypeptide: Transcriptional regulator PUL4 (591 aa).

Residues cysteine 3 to cysteine 29 constitute a DNA-binding region (zn(2)-C6 fungal-type).

The protein localises to the nucleus. In terms of biological role, transcription factor involved in regulation of the PUL gene cluster that mediates the formation of pulcherrimin, a red iron-containing pigment composed of two cyclized and modified leucine molecules that acts as a siderophore, a chelator that binds iron outside the cell for subsequent uptake. The chain is Transcriptional regulator PUL4 from Kluyveromyces lactis (strain ATCC 8585 / CBS 2359 / DSM 70799 / NBRC 1267 / NRRL Y-1140 / WM37) (Yeast).